Here is a 197-residue protein sequence, read N- to C-terminus: Nucleoid occlusion factor SlmA (197 aa).

The 61-residue stretch at 7–67 folds into the HTH tetR-type domain; it reads INRREHILQC…GLIEFIEESL (61 aa). The H-T-H motif DNA-binding region spans 30–49; the sequence is TTAKLASEVGVSEAALYRHF. Residues 110–130 adopt a coiled-coil conformation; sequence ALLGENERLRSRISSLFAKIE.

The protein belongs to the nucleoid occlusion factor SlmA family. Homodimer. Interacts with FtsZ.

Its subcellular location is the cytoplasm. The protein resides in the nucleoid. Functionally, required for nucleoid occlusion (NO) phenomenon, which prevents Z-ring formation and cell division over the nucleoid. Acts as a DNA-associated cell division inhibitor that binds simultaneously chromosomal DNA and FtsZ, and disrupts the assembly of FtsZ polymers. SlmA-DNA-binding sequences (SBS) are dispersed on non-Ter regions of the chromosome, preventing FtsZ polymerization at these regions. In Shewanella sp. (strain W3-18-1), this protein is Nucleoid occlusion factor SlmA.